The following is a 135-amino-acid chain: Mediator of RNA polymerase II transcription subunit 10 (135 aa).

This sequence belongs to the Mediator complex subunit 10 family. In terms of assembly, component of the Mediator complex.

Its subcellular location is the nucleus. In terms of biological role, component of the Mediator complex, a coactivator involved in the regulated transcription of nearly all RNA polymerase II-dependent genes. Mediator functions as a bridge to convey information from gene-specific regulatory proteins to the basal RNA polymerase II transcription machinery. Mediator is recruited to promoters by direct interactions with regulatory proteins and serves as a scaffold for the assembly of a functional preinitiation complex with RNA polymerase II and the general transcription factors. The protein is Mediator of RNA polymerase II transcription subunit 10 (med10) of Xenopus laevis (African clawed frog).